The chain runs to 376 residues: uncharacterized protein (376 aa).

It belongs to the YCR102c/YLR460c/YNL134c family.

This is an uncharacterized protein from Saccharomyces cerevisiae (strain ATCC 204508 / S288c) (Baker's yeast).